Consider the following 714-residue polypeptide: Transcription activator of gluconeogenesis UREG_00958 (714 aa).

The segment at 1–71 (MTSNARNGPL…NAKDPLRPRR (71 aa)) is disordered. Positions 38 to 62 (ESQTQVENSSTKQPNGQTKPMSASN) are enriched in polar residues. A DNA-binding region (zn(2)-C6 fungal-type) is located at residues 78 to 106 (CFACQRAHLTCGDERPCQRCIKRGIQNSC). 3 disordered regions span residues 176 to 228 (SLSQ…NASG), 274 to 312 (GAGD…TAQP), and 539 to 567 (NTGG…VNPS). The span at 191 to 228 (FPSQSPVSPTFSITANSATSGNQNMPSSLPASNGNASG) shows a compositional bias: polar residues. A compositionally biased stretch (low complexity) spans 545-555 (GSTSGTSSRGS).

It belongs to the ERT1/acuK family.

It localises to the nucleus. Functionally, transcription factor which regulates nonfermentable carbon utilization. Activator of gluconeogenetic genes. In Uncinocarpus reesii (strain UAMH 1704), this protein is Transcription activator of gluconeogenesis UREG_00958.